The primary structure comprises 361 residues: Palmitoyltransferase ZDHHC2 (361 aa).

The Cytoplasmic portion of the chain corresponds to Met1–Leu15. A helical transmembrane segment spans residues Tyr16–Val36. At Gln37–Thr50 the chain is on the lumenal side. Residues Val51–Ile71 form a helical membrane-spanning segment. At Tyr72–Lys167 the chain is on the cytoplasmic side. The DHHC domain occupies Arg124–Ala174. The S-palmitoyl cysteine intermediate role is filled by Cys154. A helical transmembrane segment spans residues Phe168–Met188. The Lumenal portion of the chain corresponds to Gln189–His207. The chain crosses the membrane as a helical span at residues Ile208 to Tyr228. Residues His229–Thr361 are Cytoplasmic-facing. The mediates localization to plasma membrane and recycling endosomes stretch occupies residues Asn296–Thr361. Residues Pro299–Arg308 show a composition bias toward pro residues. Residues Pro299 to Thr361 are disordered. Polar residues predominate over residues Ser331–Asp340. The short motif at Leu333–Leu334 is the Non-canonical dileucine endocytic signal element. Positions Asn352 to Leu355 match the NPxY-like endocytic signal motif.

Belongs to the DHHC palmitoyltransferase family. Monomer. Homodimer. The monomeric form has a higher catalytic activity. Post-translationally, autopalmitoylated.

It is found in the endoplasmic reticulum membrane. The protein localises to the golgi apparatus membrane. Its subcellular location is the postsynaptic density. It localises to the postsynaptic recycling endosome membrane. The protein resides in the cell membrane. It catalyses the reaction L-cysteinyl-[protein] + hexadecanoyl-CoA = S-hexadecanoyl-L-cysteinyl-[protein] + CoA. The enzyme catalyses L-cysteinyl-[protein] + tetradecanoyl-CoA = S-tetradecanoyl-L-cysteinyl-[protein] + CoA. The catalysed reaction is L-cysteinyl-[protein] + octadecanoyl-CoA = S-octadecanoyl-L-cysteinyl-[protein] + CoA. Palmitoyltransferase that catalyzes the addition of palmitate onto various protein substrates and is involved in a variety of cellular processes. Has no stringent fatty acid selectivity and in addition to palmitate can also transfer onto target proteins myristate from tetradecanoyl-CoA and stearate from octadecanoyl-CoA. In Danio rerio (Zebrafish), this protein is Palmitoyltransferase ZDHHC2.